Consider the following 156-residue polypeptide: Small ribosomal subunit protein uS7 (156 aa).

Belongs to the universal ribosomal protein uS7 family. In terms of assembly, part of the 30S ribosomal subunit. Contacts proteins S9 and S11.

Functionally, one of the primary rRNA binding proteins, it binds directly to 16S rRNA where it nucleates assembly of the head domain of the 30S subunit. Is located at the subunit interface close to the decoding center, probably blocks exit of the E-site tRNA. The protein is Small ribosomal subunit protein uS7 of Shigella dysenteriae serotype 1 (strain Sd197).